The chain runs to 347 residues: Protein YIPF3 (347 aa).

Positions 1–28 (MATQAAPASGVRNGAGPEWGGFEENIQG) are disordered. N-acetylalanine is present on Ala-2. The Cytoplasmic portion of the chain corresponds to 2-145 (ATQAAPASGV…PIKMVNFPQK (144 aa)). A helical transmembrane segment spans residues 146–166 (VAGELYGPLMLVFTLVAILLH). Topologically, residues 167 to 184 (GMKTSDTIIREGTLMGTA) are lumenal. Residues 185–205 (IGTCFGYWLGVSSFIYFLAYL) form a helical membrane-spanning segment. Over 206–211 (CNAQIT) the chain is Cytoplasmic. The helical transmembrane segment at 212–234 (MLQMLALLGYGLFGHCIVLFITY) threads the bilayer. Over 235-237 (NIH) the chain is Lumenal. A helical membrane pass occupies residues 238–260 (LHALFYLFWLLLGGLSTLRMVAV). The Cytoplasmic segment spans residues 261–271 (LVSRTVGPTQR). The chain crosses the membrane as a helical span at residues 272-292 (LLLCGTLAALHMLFLLYLHFA). The Lumenal segment spans residues 293–347 (YHKVVEGILDTLEGPNIPPMQRVPRDIPAVLPAAKLPVAVVNATAKAIAVTLQSH). Residue Asn-334 is glycosylated (N-linked (GlcNAc...) asparagine).

It belongs to the YIP1 family. As to quaternary structure, interacts with YIPF4 and YIPF5.

It localises to the cell membrane. It is found in the golgi apparatus. The protein localises to the cis-Golgi network membrane. Its subcellular location is the cytoplasm. Functionally, involved in the maintenance of the Golgi structure. May play a role in hematopoiesis. This chain is Protein YIPF3 (Yipf3), found in Rattus norvegicus (Rat).